A 218-amino-acid chain; its full sequence is Holliday junction branch migration complex subunit RuvA (218 aa).

Residues 1-64 (MIGKITGRLE…EDVMQLFGFT (64 aa)) are domain I. Positions 65-143 (TLTEKEWHRL…SVMGMSDTQA (79 aa)) are domain II. Residues 144-164 (TVAAQSSDAVIETRAAPSPVV) are flexible linker. The interval 165–218 (QNPSAQAEALSALSNLGYAPGDAAAAVAQAAGELPDAETPDLIRAALKRLAPKG) is domain III.

This sequence belongs to the RuvA family. In terms of assembly, homotetramer. Forms an RuvA(8)-RuvB(12)-Holliday junction (HJ) complex. HJ DNA is sandwiched between 2 RuvA tetramers; dsDNA enters through RuvA and exits via RuvB. An RuvB hexamer assembles on each DNA strand where it exits the tetramer. Each RuvB hexamer is contacted by two RuvA subunits (via domain III) on 2 adjacent RuvB subunits; this complex drives branch migration. In the full resolvosome a probable DNA-RuvA(4)-RuvB(12)-RuvC(2) complex forms which resolves the HJ.

Its subcellular location is the cytoplasm. Its function is as follows. The RuvA-RuvB-RuvC complex processes Holliday junction (HJ) DNA during genetic recombination and DNA repair, while the RuvA-RuvB complex plays an important role in the rescue of blocked DNA replication forks via replication fork reversal (RFR). RuvA specifically binds to HJ cruciform DNA, conferring on it an open structure. The RuvB hexamer acts as an ATP-dependent pump, pulling dsDNA into and through the RuvAB complex. HJ branch migration allows RuvC to scan DNA until it finds its consensus sequence, where it cleaves and resolves the cruciform DNA. This Roseobacter denitrificans (strain ATCC 33942 / OCh 114) (Erythrobacter sp. (strain OCh 114)) protein is Holliday junction branch migration complex subunit RuvA.